We begin with the raw amino-acid sequence, 161 residues long: Crossover junction endodeoxyribonuclease RuvC (161 aa).

Active-site residues include aspartate 9, glutamate 69, and histidine 144. Positions 9, 69, and 144 each coordinate Mg(2+).

Belongs to the RuvC family. As to quaternary structure, homodimer which binds Holliday junction (HJ) DNA. The HJ becomes 2-fold symmetrical on binding to RuvC with unstacked arms; it has a different conformation from HJ DNA in complex with RuvA. In the full resolvosome a probable DNA-RuvA(4)-RuvB(12)-RuvC(2) complex forms which resolves the HJ. Mg(2+) is required as a cofactor.

It is found in the cytoplasm. The enzyme catalyses Endonucleolytic cleavage at a junction such as a reciprocal single-stranded crossover between two homologous DNA duplexes (Holliday junction).. In terms of biological role, the RuvA-RuvB-RuvC complex processes Holliday junction (HJ) DNA during genetic recombination and DNA repair. Endonuclease that resolves HJ intermediates. Cleaves cruciform DNA by making single-stranded nicks across the HJ at symmetrical positions within the homologous arms, yielding a 5'-phosphate and a 3'-hydroxyl group; requires a central core of homology in the junction. The consensus cleavage sequence is 5'-(A/T)TT(C/G)-3'. Cleavage occurs on the 3'-side of the TT dinucleotide at the point of strand exchange. HJ branch migration catalyzed by RuvA-RuvB allows RuvC to scan DNA until it finds its consensus sequence, where it cleaves and resolves the cruciform DNA. This is Crossover junction endodeoxyribonuclease RuvC from Borrelia turicatae (strain 91E135).